Here is a 263-residue protein sequence, read N- to C-terminus: uncharacterized protein (263 aa).

ATP is bound at residue Gly-31–Thr-38.

The protein belongs to the CbbQ/NirQ/NorQ/GpvN family.

This is an uncharacterized protein from Staphylococcus aureus (strain NCTC 8325 / PS 47).